The following is a 446-amino-acid chain: ATP synthase subunit b-delta (446 aa).

The segment at 1-168 (MSTFIGQLVG…PKGADVEYPL (168 aa)) is ATP synthase subunit b. A helical membrane pass occupies residues 4–24 (FIGQLVGFAAIVYLVWWYVVP). Residues 169-446 (LAKMRSASRR…LVAAEAALPD (278 aa)) form an ATP synthase subunit delta region.

It in the N-terminal section; belongs to the ATPase B chain family. In the C-terminal section; belongs to the ATPase delta chain family. As to quaternary structure, F-type ATPases have 2 components, F(1) - the catalytic core - and F(0) - the membrane proton channel. F(1) has five subunits: alpha(3), beta(3), gamma(1), delta(1), epsilon(1). F(0) has three main subunits: a(1), b(2) and c(10-14). The alpha and beta chains form an alternating ring which encloses part of the gamma chain. F(1) is attached to F(0) by a central stalk formed by the gamma and epsilon chains, while a peripheral stalk is formed by the delta and b chains.

It localises to the cell membrane. Functionally, f(1)F(0) ATP synthase produces ATP from ADP in the presence of a proton or sodium gradient. F-type ATPases consist of two structural domains, F(1) containing the extramembraneous catalytic core and F(0) containing the membrane proton channel, linked together by a central stalk and a peripheral stalk. During catalysis, ATP synthesis in the catalytic domain of F(1) is coupled via a rotary mechanism of the central stalk subunits to proton translocation. In terms of biological role, this fusion protein includes a component of the F(0) channel (subunit b) and of the F(1) subunit (subunit delta). Two copies of subunit b and one of delta together form the peripheral 'stator' stalk which links F(1) to F(0). This Mycobacterium leprae (strain Br4923) protein is ATP synthase subunit b-delta (atpFH).